The following is an 883-amino-acid chain: Alanine--tRNA ligase (883 aa).

Residues H562, H566, C675, and H679 each coordinate Zn(2+).

Belongs to the class-II aminoacyl-tRNA synthetase family. Requires Zn(2+) as cofactor.

The protein resides in the cytoplasm. It catalyses the reaction tRNA(Ala) + L-alanine + ATP = L-alanyl-tRNA(Ala) + AMP + diphosphate. In terms of biological role, catalyzes the attachment of alanine to tRNA(Ala) in a two-step reaction: alanine is first activated by ATP to form Ala-AMP and then transferred to the acceptor end of tRNA(Ala). Also edits incorrectly charged Ser-tRNA(Ala) and Gly-tRNA(Ala) via its editing domain. The chain is Alanine--tRNA ligase from Ruegeria sp. (strain TM1040) (Silicibacter sp.).